Consider the following 164-residue polypeptide: UPF0304 protein PM1500 (164 aa).

The protein belongs to the UPF0304 family.

In Pasteurella multocida (strain Pm70), this protein is UPF0304 protein PM1500.